The sequence spans 404 residues: Probable oxalate decarboxylase ARB_04859 (404 aa).

A signal peptide spans 1 to 17; sequence MKYSAVLVAALAAIADA. One can recognise a Cupin type-1 1 domain in the interval 74 to 215; sequence FSLSKTRMLY…NFGVPPSTFD (142 aa). 4 residues coordinate Mn(2+): His-117, His-119, Glu-123, and His-162. N-linked (GlcNAc...) asparagine glycosylation is found at Asn-226 and Asn-244. One can recognise a Cupin type-1 2 domain in the interval 249–393; sequence FHISNAPEIQ…AINVPIEVIE (145 aa). His-296, His-298, Glu-303, and His-342 together coordinate Mn(2+). An N-linked (GlcNAc...) asparagine glycan is attached at Asn-346. The Proton donor role is filled by Glu-357.

Mn(2+) is required as a cofactor.

It is found in the secreted. The catalysed reaction is oxalate + H(+) = formate + CO2. Its function is as follows. Converts oxalate to formate and CO(2) in an O(2)-dependent reaction. Can also catalyze minor side reactions: oxalate oxidation to produce H(2)O(2), and oxalate-dependent, H(2)O(2)-independent dye oxidations. In Arthroderma benhamiae (strain ATCC MYA-4681 / CBS 112371) (Trichophyton mentagrophytes), this protein is Probable oxalate decarboxylase ARB_04859.